The primary structure comprises 852 residues: MEDKNKTIKETLQGAADAGKRKKLIIKKKGDENSAPSSASPKKETIAESAPVKPLTPLPSRGDSGQSPIVRPAPSASKEVKYEESSRKQDSGQSGSRPLRDKDSQVRPSGDSSYPVSRSPFQKEDSNIIVSRPTQRPVRPNPGGSYQGNRGPGQGGGYQGNRGPGQGGGYQGNRGPGQQTGPGNRFGGSGPGNRSGGPGGRPMPITSAEVELSQARGSTGASKKKGHDKEKTSSDKRDFSGAENTKFFKQRFKKTKVVGVSGVSVPKEITVLENVQVGELAKKMNLKPGDVIGKLMKMGMMVTINNIIDAETAALLADEYGCKVKVVSLYEETIIEEEKDNEGDYINRPPVVTIMGHVDHGKTKLLDTIRRSSVIDTESGGITQHIGAYQVKTARGLITFLDTPGHEAFTSMRARGAKVTDIVILVVAADDGVMPQTLEAISHAKAAEVPIIVAINKIDLPTANPDKIMQELANHGLQSEEWGGQTMYVKISARENIGIDKLLEVILLQAEVMDLKANPKRKAKGTIIEAKLDPGRGSVATVLIQNGTLRVGDPFVAGVFSGRVRAMYNDLGQLIEEAGPAFPAQVTGIDGVPDAGAPFDAMADEKEARNISQHRIEFEKIGNAGAAAGTTSKVTLENMNEYIKLGALKELKVIIKADVRGSAEAIKESLEKLSTPEVKLNVIQSGAGAIVDMDVMLASASNALIIGFHVRANPKTIALAEKEQVQIKYYNIIYQVVDEIKLAMEGLLEPEKIEEVIGTAEIREIFKVSKIGNIAGCMVTSGKIQKSANVRVISDGVTKFDGKLKSLKRVKDDVNDVVSGFECGIQVDGYNDFKVGDTIEAYNVTVIKRKLE.

The interval Met-1–Ser-240 is disordered. A compositionally biased stretch (basic and acidic residues) spans Lys-78–Asp-90. A compositionally biased stretch (polar residues) spans Val-106–Pro-120. Gly residues predominate over residues Arg-150 to Gly-200. The segment covering His-227–Ser-240 has biased composition (basic and acidic residues). The tr-type G domain occupies Asn-347–Lys-516. The G1 stretch occupies residues Gly-356–Thr-363. Gly-356–Thr-363 serves as a coordination point for GTP. A G2 region spans residues Gly-381 to His-385. A G3 region spans residues Asp-402 to Gly-405. GTP-binding positions include Asp-402–His-406 and Asn-456–Asp-459. The segment at Asn-456 to Asp-459 is G4. Residues Ser-492–Arg-494 are G5.

It belongs to the TRAFAC class translation factor GTPase superfamily. Classic translation factor GTPase family. IF-2 subfamily.

The protein resides in the cytoplasm. Its function is as follows. One of the essential components for the initiation of protein synthesis. Protects formylmethionyl-tRNA from spontaneous hydrolysis and promotes its binding to the 30S ribosomal subunits. Also involved in the hydrolysis of GTP during the formation of the 70S ribosomal complex. The sequence is that of Translation initiation factor IF-2 from Leptospira borgpetersenii serovar Hardjo-bovis (strain JB197).